Consider the following 337-residue polypeptide: Ornithine carbamoyltransferase, catabolic (337 aa).

Carbamoyl phosphate is bound by residues 58 to 61 (STRT), Gln85, Arg109, and 135 to 138 (HPTQ). L-ornithine is bound by residues Asn167, Asp231, and 235-236 (SM). Residues 272–273 (CL) and Arg317 each bind carbamoyl phosphate.

The protein belongs to the aspartate/ornithine carbamoyltransferase superfamily. OTCase family.

Its subcellular location is the cytoplasm. It carries out the reaction carbamoyl phosphate + L-ornithine = L-citrulline + phosphate + H(+). The protein operates within amino-acid degradation; L-arginine degradation via ADI pathway; carbamoyl phosphate from L-arginine: step 2/2. Its function is as follows. Reversibly catalyzes the transfer of the carbamoyl group from carbamoyl phosphate (CP) to the N(epsilon) atom of ornithine (ORN) to produce L-citrulline. The polypeptide is Ornithine carbamoyltransferase, catabolic (arcB) (Latilactobacillus sakei (Lactobacillus sakei)).